A 1076-amino-acid polypeptide reads, in one-letter code: GPI inositol-deacylase A (1076 aa).

The chain crosses the membrane as a helical span at residues 3-23 (IATFPALAITALALVLWATVA). N-linked (GlcNAc...) asparagine glycans are attached at residues Asn48 and Asn119. Ser240 is a catalytic residue. An N-linked (GlcNAc...) asparagine glycan is attached at Asn404. Transmembrane regions (helical) follow at residues 765–785 (FLGFYRVMFAIFPMFVFLCLL) and 815–835 (WILAGSCAIPFVPHVLVSLLY). Asn849 carries an N-linked (GlcNAc...) asparagine glycan. 3 consecutive transmembrane segments (helical) span residues 855–875 (FLGPVSLVIATGIVVVLHWLL), 877–897 (ILTLWVCQCYYMLGLAPIAPE), and 910–930 (FLLLLVFKIVPHQFAFMVAVL). N-linked (GlcNAc...) asparagine glycosylation is found at Asn952 and Asn966. Transmembrane regions (helical) follow at residues 970 to 990 (SLLLLLVLLLPINAPTLVVWL), 1006 to 1026 (EVSAILPILLLVLTASRGIMI), and 1035 to 1055 (IYATFAFLAYFALFVLFHGVV).

It belongs to the GPI inositol-deacylase family.

The protein resides in the endoplasmic reticulum membrane. Its function is as follows. Involved in inositol deacylation of GPI-anchored proteins which plays important roles in the quality control and ER-associated degradation of GPI-anchored proteins. This chain is GPI inositol-deacylase A (BST1A), found in Yarrowia lipolytica (strain CLIB 122 / E 150) (Yeast).